We begin with the raw amino-acid sequence, 467 residues long: Probable Xaa-Pro aminopeptidase pepP (467 aa).

Positions 264, 275, 398, and 438 each coordinate Mn(2+).

This sequence belongs to the peptidase M24B family. Mn(2+) serves as cofactor.

It carries out the reaction Release of any N-terminal amino acid, including proline, that is linked to proline, even from a dipeptide or tripeptide.. Functionally, catalyzes the removal of a penultimate prolyl residue from the N-termini of peptides. In Neosartorya fischeri (strain ATCC 1020 / DSM 3700 / CBS 544.65 / FGSC A1164 / JCM 1740 / NRRL 181 / WB 181) (Aspergillus fischerianus), this protein is Probable Xaa-Pro aminopeptidase pepP (pepP).